Reading from the N-terminus, the 541-residue chain is Eukaryotic translation initiation factor 3 subunit L (541 aa).

The 209-residue stretch at 308–516 (TFSDILLYIQ…IHIADTKVSH (209 aa)) folds into the PCI domain.

Belongs to the eIF-3 subunit L family. As to quaternary structure, component of the eukaryotic translation initiation factor 3 (eIF-3) complex. The eIF-3 complex interacts with pix.

The protein localises to the cytoplasm. Functionally, component of the eukaryotic translation initiation factor 3 (eIF-3) complex, which is involved in protein synthesis of a specialized repertoire of mRNAs and, together with other initiation factors, stimulates binding of mRNA and methionyl-tRNAi to the 40S ribosome. The eIF-3 complex specifically targets and initiates translation of a subset of mRNAs involved in cell proliferation. The polypeptide is Eukaryotic translation initiation factor 3 subunit L (Drosophila pseudoobscura pseudoobscura (Fruit fly)).